The primary structure comprises 351 residues: GTP 3',8-cyclase (351 aa).

The Radical SAM core domain occupies 29–254; it reads RFGRVARDLR…EHGREDPSAP (226 aa). R38 is a GTP binding site. Residues C45 and C49 each contribute to the [4Fe-4S] cluster site. Residue Y51 coordinates S-adenosyl-L-methionine. C52 provides a ligand contact to [4Fe-4S] cluster. R89 lines the GTP pocket. Residue G93 coordinates S-adenosyl-L-methionine. Position 120 (T120) interacts with GTP. S144 contributes to the S-adenosyl-L-methionine binding site. K181 lines the GTP pocket. M214 contributes to the S-adenosyl-L-methionine binding site. Positions 278 and 281 each coordinate [4Fe-4S] cluster. 283–285 is a binding site for GTP; the sequence is RTR. Residue C295 coordinates [4Fe-4S] cluster.

The protein belongs to the radical SAM superfamily. MoaA family. Monomer and homodimer. [4Fe-4S] cluster is required as a cofactor.

It catalyses the reaction GTP + AH2 + S-adenosyl-L-methionine = (8S)-3',8-cyclo-7,8-dihydroguanosine 5'-triphosphate + 5'-deoxyadenosine + L-methionine + A + H(+). It functions in the pathway cofactor biosynthesis; molybdopterin biosynthesis. Functionally, catalyzes the cyclization of GTP to (8S)-3',8-cyclo-7,8-dihydroguanosine 5'-triphosphate. The protein is GTP 3',8-cyclase of Rhodococcus opacus (strain B4).